Consider the following 1358-residue polypeptide: Probable serine/threonine-protein kinase ifkB (1358 aa).

The 582-residue stretch at 1–582 folds into the Protein kinase domain; sequence MIGKGGFGVV…TKQLLESGLL (582 aa). Residues 2–10 and Lys-25 each bind ATP; that span reads IGKGGFGVV. Residues 125-359 form a disordered region; that stretch reads GANNTAGGGD…SSSRKKPPKE (235 aa). Residues 136-148 show a composition bias toward polar residues; sequence VSNANSNKSMIVG. The segment covering 149–196 has biased composition (low complexity); it reads NNNKKLTLSSSNTSSSSSLLSNNKSKILNTSKSTSTNTSTSTSTSNTN. Residues 197–208 show a composition bias toward basic residues; it reads KNKKISKKKKSK. A compositionally biased stretch (low complexity) spans 258–285; it reads NNNNDSNNNYHSDNESDSFSGSISMSDG. Over residues 306 to 333 the composition is skewed to acidic residues; sequence DDNENDDDDEEDDDDEYDEEDDDYETFD. Over residues 342 to 351 the composition is skewed to low complexity; sequence SNNSKLSTSS. Asp-413 serves as the catalytic Proton acceptor. Disordered stretches follow at residues 445 to 470 and 1148 to 1204; these read DDLN…TAQQ and GSGG…QQTS. Residues 447–466 are compositionally biased toward low complexity; the sequence is LNSSTSNAANNINLSSSTNS. The segment covering 1148 to 1172 has biased composition (gly residues); it reads GSGGSGGSGGGSSMSSGGGGGGNSN. The span at 1185-1199 shows a compositional bias: low complexity; the sequence is SNQSTSSSGNSNNSN.

This sequence belongs to the protein kinase superfamily. Ser/Thr protein kinase family. GCN2 subfamily.

It catalyses the reaction L-seryl-[protein] + ATP = O-phospho-L-seryl-[protein] + ADP + H(+). The enzyme catalyses L-threonyl-[protein] + ATP = O-phospho-L-threonyl-[protein] + ADP + H(+). This is Probable serine/threonine-protein kinase ifkB (ifkB) from Dictyostelium discoideum (Social amoeba).